The chain runs to 423 residues: Adenylosuccinate synthetase (423 aa).

GTP-binding positions include glycine 13–lysine 19 and glycine 41–threonine 43. Residue aspartate 14 is the Proton acceptor of the active site. The Mg(2+) site is built by aspartate 14 and glycine 41. Residues aspartate 14–lysine 17, asparagine 39–histidine 42, threonine 130, arginine 144, glutamine 223, threonine 238, and arginine 302 contribute to the IMP site. Histidine 42 acts as the Proton donor in catalysis. Serine 298–arginine 304 provides a ligand contact to substrate. Residues arginine 304 and serine 410–glycine 412 contribute to the GTP site.

It belongs to the adenylosuccinate synthetase family. Homodimer. Mg(2+) is required as a cofactor.

The protein localises to the cytoplasm. The catalysed reaction is IMP + L-aspartate + GTP = N(6)-(1,2-dicarboxyethyl)-AMP + GDP + phosphate + 2 H(+). It functions in the pathway purine metabolism; AMP biosynthesis via de novo pathway; AMP from IMP: step 1/2. Plays an important role in the de novo pathway of purine nucleotide biosynthesis. Catalyzes the first committed step in the biosynthesis of AMP from IMP. In Porphyromonas gingivalis (strain ATCC BAA-308 / W83), this protein is Adenylosuccinate synthetase.